A 67-amino-acid chain; its full sequence is Large ribosomal subunit protein bL35 (67 aa).

This sequence belongs to the bacterial ribosomal protein bL35 family.

The chain is Large ribosomal subunit protein bL35 from Agrobacterium fabrum (strain C58 / ATCC 33970) (Agrobacterium tumefaciens (strain C58)).